Consider the following 259-residue polypeptide: Type III pantothenate kinase (259 aa).

Position 6-13 (6-13 (DVGNTNCT)) interacts with ATP. 107 to 110 (GSDR) lines the substrate pocket. D109 functions as the Proton acceptor in the catalytic mechanism. D129 contacts K(+). T132 serves as a coordination point for ATP. T184 contacts substrate.

This sequence belongs to the type III pantothenate kinase family. In terms of assembly, homodimer. Requires NH4(+) as cofactor. It depends on K(+) as a cofactor.

It localises to the cytoplasm. The catalysed reaction is (R)-pantothenate + ATP = (R)-4'-phosphopantothenate + ADP + H(+). It functions in the pathway cofactor biosynthesis; coenzyme A biosynthesis; CoA from (R)-pantothenate: step 1/5. Its function is as follows. Catalyzes the phosphorylation of pantothenate (Pan), the first step in CoA biosynthesis. This Listeria monocytogenes serovar 1/2a (strain ATCC BAA-679 / EGD-e) protein is Type III pantothenate kinase.